The sequence spans 142 residues: HTH-type transcriptional regulator MntR (142 aa).

Residues 1 to 63 form the HTH dtxR-type domain; it reads MPTPSMEDYI…YEKYRGLVLT (63 aa). Asp8, Glu11, His77, Glu99, Glu102, and His103 together coordinate Mn(2+).

Belongs to the DtxR/MntR family. As to quaternary structure, homodimer.

It is found in the cytoplasm. With respect to regulation, DNA binding is strongly activated by Mn(2+). In terms of biological role, central regulator of manganese homeostasis. In Bacillus mycoides (strain KBAB4) (Bacillus weihenstephanensis), this protein is HTH-type transcriptional regulator MntR.